A 61-amino-acid chain; its full sequence is Large ribosomal subunit protein uL29 (61 aa).

Belongs to the universal ribosomal protein uL29 family.

The chain is Large ribosomal subunit protein uL29 from Campylobacter lari (strain RM2100 / D67 / ATCC BAA-1060).